A 689-amino-acid chain; its full sequence is Glycine--tRNA ligase beta subunit (689 aa).

It belongs to the class-II aminoacyl-tRNA synthetase family. Tetramer of two alpha and two beta subunits.

It localises to the cytoplasm. The enzyme catalyses tRNA(Gly) + glycine + ATP = glycyl-tRNA(Gly) + AMP + diphosphate. In Salmonella arizonae (strain ATCC BAA-731 / CDC346-86 / RSK2980), this protein is Glycine--tRNA ligase beta subunit.